A 143-amino-acid polypeptide reads, in one-letter code: Peptide methionine sulfoxide reductase MsrB (143 aa).

A MsrB domain is found at 16–139 (DAELRRRLTP…NSAALNFEAK (124 aa)). Residues Cys-55, Cys-58, Cys-104, and Cys-107 each contribute to the Zn(2+) site. Residue Cys-128 is the Nucleophile of the active site.

This sequence belongs to the MsrB Met sulfoxide reductase family. Requires Zn(2+) as cofactor.

It catalyses the reaction L-methionyl-[protein] + [thioredoxin]-disulfide + H2O = L-methionyl-(R)-S-oxide-[protein] + [thioredoxin]-dithiol. This is Peptide methionine sulfoxide reductase MsrB from Burkholderia thailandensis (strain ATCC 700388 / DSM 13276 / CCUG 48851 / CIP 106301 / E264).